The chain runs to 372 residues: MKYDLIIIGSGSVGAAAGYYATRAGLKVLMTDAHMPPHQQGSHHGDTRLIRHAYGEGEKYVPLVLRAQALWDELSAHNEEPIFVRSGVVNLGPADSAFLANVARSAQQRQLNVERLDATALMTRWPEIRVPDNYIGLFEADSGFLRSELAITTWLRLAREAGCAQLFNCPVTRIHHDDNGVTIETGEGRYHASRALLSAGTWVKALAPELPVQPIRKVFAWFQADGRYSVKNRFPAFTGEMPNGDQYYGFPAENNELKIGKHNGGQLIQSQEERKPFAAVASDGAEAFPFLRNVLPGIGGCLHGAACTYDNSPDEDFIIDTLPGHENTLVITGLSGHGFKFAPVLGEIAADFALEKTPSFDLTPFRLSRFSQ.

Residue 4–34 coordinates FAD; that stretch reads DLIIIGSGSVGAAAGYYATRAGLKVLMTDAH. Cysteine 307 carries the post-translational modification S-8alpha-FAD cysteine.

The protein belongs to the MSOX/MTOX family. MTOX subfamily. As to quaternary structure, monomer. FAD is required as a cofactor.

It carries out the reaction N(alpha)-methyl-L-tryptophan + O2 + H2O = L-tryptophan + formaldehyde + H2O2. In terms of biological role, catalyzes the oxidative demethylation of N-methyl-L-tryptophan. The chain is N-methyl-L-tryptophan oxidase from Salmonella arizonae (strain ATCC BAA-731 / CDC346-86 / RSK2980).